We begin with the raw amino-acid sequence, 556 residues long: MKTDIEIAQEATMKPITEIAQGLDLLEDEIELYGKYKAKVNFSAWERLKDKPDAKLILVTAINPTPAGEGKTTTTVGLGQAMSKIGKNAMIALREPSLGPCFGVKGGAAGGGYAQVVPMEDINLHFTGDFHAITSTHNLLAALLDNHIQQGNLLNIDPRQIVFRRVMDMNDRALRKIVIGLGGRTEGIPRENGFDITVASEIMAILCLAKDLMDLKERFGRIVVAYTYDGKAITAHDLEAEGAMALLMKDAIKPNLVQTLENTPVFIHGGPFANIAHGCNSVVATRMAMKLADYVITEAGFGADLGAEKFYDLKCRFAELKPAATVIVATVRALKMNGGVAKEDLGPENLEALAKGIVNLEKHIENIGKFGVPAVVAINRFPTDTDAELEFVAERCRQLGAEFALSEVFTKGGEGGIELAKAVLNIVDNKESNFHVLYELDLPIAKKIETICKEVYGADGVNFTKEALTSMKKYEELGYGQLPICMAKTQYSLTDDQNVLGRPSGFTITVRELRLSAGAGFLVAITGAIMTMPGLPKRPAALRMDIDAAGRITGLF.

65–72 (TPAGEGKT) provides a ligand contact to ATP.

This sequence belongs to the formate--tetrahydrofolate ligase family.

It catalyses the reaction (6S)-5,6,7,8-tetrahydrofolate + formate + ATP = (6R)-10-formyltetrahydrofolate + ADP + phosphate. The protein operates within one-carbon metabolism; tetrahydrofolate interconversion. The polypeptide is Formate--tetrahydrofolate ligase 1 (Desulfitobacterium hafniense (strain Y51)).